The sequence spans 76 residues: uncharacterized protein (76 aa).

The disordered stretch occupies residues 1–24 (MPLRLCQGRKDRASDPVRDDGSPP). Basic and acidic residues predominate over residues 8–22 (GRKDRASDPVRDDGS).

This is an uncharacterized protein from Dryophytes versicolor (chameleon treefrog).